We begin with the raw amino-acid sequence, 884 residues long: Translation initiation factor IF-2 (884 aa).

The interval Val-93–Gln-288 is disordered. Positions Glu-99–Trp-209 are enriched in basic and acidic residues. Residues Gln-216–His-229 show a composition bias toward polar residues. Residues Arg-231–Arg-246 show a composition bias toward basic and acidic residues. A compositionally biased stretch (basic residues) spans Ser-247–Asn-261. Over residues Lys-262–Ala-275 the composition is skewed to basic and acidic residues. Residues His-383 to Lys-552 enclose the tr-type G domain. Positions Gly-392–Thr-399 are G1. Position 392–399 (Gly-392–Thr-399) interacts with GTP. The segment at Gly-417–His-421 is G2. Positions Asp-438–Gly-441 are G3. GTP contacts are provided by residues Asp-438–His-442 and Asn-492–Asp-495. The segment at Asn-492 to Asp-495 is G4. The G5 stretch occupies residues Ser-528–Lys-530.

This sequence belongs to the TRAFAC class translation factor GTPase superfamily. Classic translation factor GTPase family. IF-2 subfamily.

The protein localises to the cytoplasm. One of the essential components for the initiation of protein synthesis. Protects formylmethionyl-tRNA from spontaneous hydrolysis and promotes its binding to the 30S ribosomal subunits. Also involved in the hydrolysis of GTP during the formation of the 70S ribosomal complex. The sequence is that of Translation initiation factor IF-2 from Yersinia pestis bv. Antiqua (strain Angola).